The chain runs to 1009 residues: Glutamate receptor ionotropic, delta-2 (1009 aa).

The signal sequence occupies residues 1–23 (MKVFPAVLFLITFWSLEWEPVLP). The Extracellular portion of the chain corresponds to 24-566 (DSIIHIGAIF…DMFACLAPFD (543 aa)). Residues asparagine 293, asparagine 306, asparagine 390, and asparagine 426 are each glycosylated (N-linked (GlcNAc...) asparagine). Ca(2+) contacts are provided by glutamate 531, valine 534, and aspartate 535. Residues 567–587 (LSLWACIAGTVLLVGTLVYLL) traverse the membrane as a helical segment. The Cytoplasmic portion of the chain corresponds to 588 to 635 (NWLNPPRLPMGSVSSTTLYNSMWFVYGSFVQQGGEVPYTTLATRMMMG). Residues 636–656 (VWWLFALIVISSYTANLAAFL) traverse the membrane as a helical segment. Residues 657–830 (TISRIENSIQ…KSGSALDIHS (174 aa)) lie on the Extracellular side of the membrane. Residue asparagine 713 is glycosylated (N-linked (GlcNAc...) asparagine). 3 residues coordinate Ca(2+): aspartate 753, aspartate 755, and serine 757. The chain crosses the membrane as a helical span at residues 831-851 (FAGVFFVLAAGVVLSCLIATV). Residues 852-1009 (ETWWTRRKGS…GNDPDRGTSI (158 aa)) are Cytoplasmic-facing. Positions 989-1009 (YQPTPAPNFSYGNDPDRGTSI) are disordered.

The protein belongs to the glutamate-gated ion channel (TC 1.A.10.1) family. GRID2 subfamily. In terms of assembly, tetramer; dimer of dimers. As to expression, expressed in cerebellar Purkinje cells, in crest cells in the medial octavolateral nucleus and in type I neurons of the optic tectum.

Its subcellular location is the postsynaptic cell membrane. It catalyses the reaction Ca(2+)(in) = Ca(2+)(out). It carries out the reaction Na(+)(in) = Na(+)(out). Its function is as follows. Member of the ionotropic glutamate receptor family, which plays a crucial role in synaptic organization and signal transduction in the central nervous system. Although it shares structural features with ionotropic glutamate receptors, does not bind glutamate as a primary ligand. Promotes synaptogenesis and mediates the D-Serine-dependent long term depression signals and AMPA receptor endocytosis of cerebellar parallel fiber-Purkinje cell (PF-PC) synapses through the NRX1B-CBLN1-GRID2 triad complex. In the presence of neurexins and cerebellins, forms cation-selective channels that are proposed to be gated by glycine and D-serine. However, recent research disputes this ligand-gated cation channel activity. Cation-selective ion channel activity can be triggered by GRM1 in Purkinje cells. The polypeptide is Glutamate receptor ionotropic, delta-2 (Danio rerio (Zebrafish)).